A 387-amino-acid chain; its full sequence is Eukaryotic translation initiation factor 3 subunit M (387 aa).

Residues Leu181–His340 enclose the PCI domain.

The protein belongs to the eIF-3 subunit M family. Component of the eukaryotic translation initiation factor 3 (eIF-3) complex. The eIF-3 complex interacts with pix.

It localises to the cytoplasm. The protein localises to the golgi apparatus. Component of the eukaryotic translation initiation factor 3 (eIF-3) complex, which is involved in protein synthesis of a specialized repertoire of mRNAs and, together with other initiation factors, stimulates binding of mRNA and methionyl-tRNAi to the 40S ribosome. The eIF-3 complex specifically targets and initiates translation of a subset of mRNAs involved in cell proliferation. This chain is Eukaryotic translation initiation factor 3 subunit M, found in Drosophila persimilis (Fruit fly).